Consider the following 1683-residue polypeptide: E3 ubiquitin-protein ligase SHPRH (1683 aa).

The disordered stretch occupies residues 1–43; the sequence is MSSRRKRAPPVRVDEEKRQQLHWNMHEDRRNEPIIISDDDEQP. Over residues 12-32 the composition is skewed to basic and acidic residues; it reads RVDEEKRQQLHWNMHEDRRNE. The residue at position 266 (Ser266) is a Phosphoserine. A Helicase ATP-binding; first part domain is found at 307–389; it reads YQREAVNWML…TVEVLALILT (83 aa). Position 373-380 (373-380) interacts with ATP; that stretch reads DEMGLGKT. Positions 438 to 512 constitute an H15 domain; it reads QCPPTRVMIL…GFSGTFTLGK (75 aa). The segment at 525 to 607 is disordered; it reads KQAVGSPRKI…QGHCPATSDS (83 aa). The span at 534 to 547 shows a compositional bias: basic and acidic residues; that stretch reads IQKETRKSGNKDTD. Basic residues predominate over residues 568-588; it reads KSRRNRSKLRKKLVPSTKKGK. Ser635 carries the post-translational modification Phosphoserine. The PHD-type zinc finger occupies 658 to 709; that stretch reads RFECICGELDQIDRKPRVQCLKCHLWQHAKCVNYDEKNLKIKPFYCPHCLVA. One can recognise a Helicase ATP-binding; second part domain in the interval 710 to 868; it reads MEPVSTRATL…FGLVVFLGIE (159 aa). The DEAQ box signature appears at 819 to 822; it reads DEAQ. Residues 1432-1479 form an RING-type zinc finger; it reads CPICARQLGKQWAVLTCGHCFCNECISIIIEQYSVGSHRSSIKCAICR. A Helicase C-terminal domain is found at 1514-1672; sequence AVVRTLMKIQ…ASVLTVADLA (159 aa).

The protein belongs to the SNF2/RAD54 helicase family. Homodimer. Interacts with HLTF, PCNA, UBE2N and RAD18. In terms of tissue distribution, broadly expressed.

The catalysed reaction is S-ubiquitinyl-[E2 ubiquitin-conjugating enzyme]-L-cysteine + [acceptor protein]-L-lysine = [E2 ubiquitin-conjugating enzyme]-L-cysteine + N(6)-ubiquitinyl-[acceptor protein]-L-lysine.. It functions in the pathway protein modification; protein ubiquitination. Functionally, E3 ubiquitin-protein ligase involved in DNA repair. Upon genotoxic stress, accepts ubiquitin from the UBE2N-UBE2V2 E2 complex and transfers it to 'Lys-164' of PCNA which had been monoubiquitinated by UBE2A/B-RAD18, promoting the formation of non-canonical poly-ubiquitin chains linked through 'Lys-63'. This Homo sapiens (Human) protein is E3 ubiquitin-protein ligase SHPRH (SHPRH).